A 237-amino-acid polypeptide reads, in one-letter code: 1-(5-phosphoribosyl)-5-[(5-phosphoribosylamino)methylideneamino] imidazole-4-carboxamide isomerase (237 aa).

The active-site Proton acceptor is the D8. D129 serves as the catalytic Proton donor.

Belongs to the HisA/HisF family.

Its subcellular location is the cytoplasm. It carries out the reaction 1-(5-phospho-beta-D-ribosyl)-5-[(5-phospho-beta-D-ribosylamino)methylideneamino]imidazole-4-carboxamide = 5-[(5-phospho-1-deoxy-D-ribulos-1-ylimino)methylamino]-1-(5-phospho-beta-D-ribosyl)imidazole-4-carboxamide. It functions in the pathway amino-acid biosynthesis; L-histidine biosynthesis; L-histidine from 5-phospho-alpha-D-ribose 1-diphosphate: step 4/9. The sequence is that of 1-(5-phosphoribosyl)-5-[(5-phosphoribosylamino)methylideneamino] imidazole-4-carboxamide isomerase from Dehalococcoides mccartyi (strain ATCC BAA-2266 / KCTC 15142 / 195) (Dehalococcoides ethenogenes (strain 195)).